Here is a 333-residue protein sequence, read N- to C-terminus: Cytosolic Fe-S cluster assembly factor NBP35 (333 aa).

Residues cysteine 32, cysteine 46, cysteine 49, and cysteine 55 each contribute to the [4Fe-4S] cluster site. ATP is bound at residue glycine 85–serine 92. [4Fe-4S] cluster is bound by residues cysteine 258 and cysteine 261.

It belongs to the Mrp/NBP35 ATP-binding proteins family. NUBP1/NBP35 subfamily. In terms of assembly, heterotetramer of 2 NBP35 and 2 CFD1 chains. It depends on [4Fe-4S] cluster as a cofactor.

It localises to the cytoplasm. The protein resides in the nucleus. Functionally, component of the cytosolic iron-sulfur (Fe/S) protein assembly (CIA) machinery. Required for maturation of extramitochondrial Fe-S proteins. The NBP35-CFD1 heterotetramer forms a Fe-S scaffold complex, mediating the de novo assembly of an Fe-S cluster and its transfer to target apoproteins. Required for biogenesis and export of both ribosomal subunits, which may reflect a role in assembly of the Fe/S clusters in RLI1, a protein which performs rRNA processing and ribosome export. In Eremothecium gossypii (strain ATCC 10895 / CBS 109.51 / FGSC 9923 / NRRL Y-1056) (Yeast), this protein is Cytosolic Fe-S cluster assembly factor NBP35.